The sequence spans 465 residues: Kynurenine 3-monooxygenase (465 aa).

The interval 1–26 (MSPGIVSQEVNGRQEPTEAARDERHG) is disordered. Basic and acidic residues predominate over residues 15–25 (EPTEAARDERH). Helical transmembrane passes span 405-427 (LLFR…SMPY) and 440-462 (LLKR…IYAQ).

It belongs to the aromatic-ring hydroxylase family. KMO subfamily. The cofactor is FAD.

The protein localises to the mitochondrion. It localises to the membrane. It carries out the reaction L-kynurenine + NADPH + O2 + H(+) = 3-hydroxy-L-kynurenine + NADP(+) + H2O. It participates in cofactor biosynthesis; NAD(+) biosynthesis; quinolinate from L-kynurenine: step 1/3. Functionally, catalyzes the hydroxylation of L-kynurenine (L-Kyn) to form 3-hydroxy-L-kynurenine (L-3OHKyn). Required for synthesis of quinolinic acid. In Drosophila melanogaster (Fruit fly), this protein is Kynurenine 3-monooxygenase.